Reading from the N-terminus, the 336-residue chain is Dihydroorotate dehydrogenase (quinone) (336 aa).

FMN contacts are provided by residues 62–66 (AGLDK) and threonine 86. Substrate is bound at residue lysine 66. 111-115 (NRMGF) serves as a coordination point for substrate. Residues asparagine 139 and asparagine 172 each coordinate FMN. Asparagine 172 lines the substrate pocket. Serine 175 functions as the Nucleophile in the catalytic mechanism. Residue asparagine 177 coordinates substrate. FMN-binding residues include lysine 217 and threonine 245. 246–247 (NT) serves as a coordination point for substrate. Residues glycine 268, glycine 297, and 318-319 (YS) each bind FMN.

The protein belongs to the dihydroorotate dehydrogenase family. Type 2 subfamily. Monomer. FMN is required as a cofactor.

Its subcellular location is the cell membrane. The catalysed reaction is (S)-dihydroorotate + a quinone = orotate + a quinol. It participates in pyrimidine metabolism; UMP biosynthesis via de novo pathway; orotate from (S)-dihydroorotate (quinone route): step 1/1. In terms of biological role, catalyzes the conversion of dihydroorotate to orotate with quinone as electron acceptor. In Aliivibrio fischeri (strain MJ11) (Vibrio fischeri), this protein is Dihydroorotate dehydrogenase (quinone).